The following is an 847-amino-acid chain: DNA ligase (847 aa).

A compositionally biased stretch (low complexity) spans 1-22 (MSDTTTGSDAADAAVPATTPAD). Positions 1 to 23 (MSDTTTGSDAADAAVPATTPADL) are disordered. NAD(+)-binding positions include 54–58 (DAEYD), 104–105 (SL), and Glu135. The active-site N6-AMP-lysine intermediate is Lys137. NAD(+) is bound by residues Arg158, Glu195, Lys326, and Lys350. Zn(2+) contacts are provided by Cys444, Cys447, Cys463, and Cys469. In terms of domain architecture, BRCT spans 686 to 775 (AAGGVLAGLA…PDAIALPEAD (90 aa)). A disordered region spans residues 770–847 (ALPEADPVPD…AEPDGPAETP (78 aa)). Composition is skewed to low complexity over residues 786-807 (DGGSAEDATAATAGAAEAATAE) and 819-833 (PAAAAAAPPTDVEAG).

This sequence belongs to the NAD-dependent DNA ligase family. LigA subfamily. It depends on Mg(2+) as a cofactor. Mn(2+) serves as cofactor.

It catalyses the reaction NAD(+) + (deoxyribonucleotide)n-3'-hydroxyl + 5'-phospho-(deoxyribonucleotide)m = (deoxyribonucleotide)n+m + AMP + beta-nicotinamide D-nucleotide.. Functionally, DNA ligase that catalyzes the formation of phosphodiester linkages between 5'-phosphoryl and 3'-hydroxyl groups in double-stranded DNA using NAD as a coenzyme and as the energy source for the reaction. It is essential for DNA replication and repair of damaged DNA. The polypeptide is DNA ligase (Clavibacter sepedonicus (Clavibacter michiganensis subsp. sepedonicus)).